The chain runs to 222 residues: Triosephosphate isomerase (222 aa).

9–11 (NYK) provides a ligand contact to substrate. His-93 acts as the Electrophile in catalysis. The active-site Proton acceptor is the Glu-141. Residues Ile-146, Gly-181, and 202–203 (AS) each bind substrate.

The protein belongs to the triosephosphate isomerase family. As to quaternary structure, homotetramer; dimer of dimers.

It localises to the cytoplasm. It carries out the reaction D-glyceraldehyde 3-phosphate = dihydroxyacetone phosphate. The protein operates within carbohydrate biosynthesis; gluconeogenesis. It functions in the pathway carbohydrate degradation; glycolysis; D-glyceraldehyde 3-phosphate from glycerone phosphate: step 1/1. In terms of biological role, involved in the gluconeogenesis. Catalyzes stereospecifically the conversion of dihydroxyacetone phosphate (DHAP) to D-glyceraldehyde-3-phosphate (G3P). This chain is Triosephosphate isomerase, found in Methanosarcina mazei (strain ATCC BAA-159 / DSM 3647 / Goe1 / Go1 / JCM 11833 / OCM 88) (Methanosarcina frisia).